The chain runs to 124 residues: Glutaredoxin-2 (124 aa).

Cysteines 13 and 16 form a disulfide.

The protein belongs to the glutaredoxin family. Homodimer.

The protein resides in the host cytoplasm. Functionally, glutaredoxin necessary for virion morphogenesis and virus replication. Functions as a thiol-disulfide transfer protein between membrane-associated OPG128 and substrates OPG095 or OPG053. The complete pathway for formation of disulfide bonds in intracellular virion membrane proteins sequentially involves oxidation of OPG072, OPG128 and OPG088. Exhibit thioltransferase and dehydroascorbate reductase activities in vitro. This is Glutaredoxin-2 (OPG088) from Camelus.